We begin with the raw amino-acid sequence, 188 residues long: MIVIMDNGGQYVHRIWRTLRYLGVEAKIIPNTTPLEEIKAMKPKGIIFSGGPDINKTGNCSAILEHYDEFNVPILGICLGHQLIAKHFGGKVGRGEKAEYSLVEIEILDENDIFRGLPRKLRVWESHMDEVKELPPGFKLLARSETCPVEAMKHESLPIYGVQFHPEVAHTEHGADIYRNFAELCGEL.

The Glutamine amidotransferase type-1 domain occupies M1–L188. C78 functions as the Nucleophile in the catalytic mechanism. Residues H165 and E167 contribute to the active site.

As to quaternary structure, heterodimer composed of a glutamine amidotransferase subunit (A) and a GMP-binding subunit (B).

It carries out the reaction XMP + L-glutamine + ATP + H2O = GMP + L-glutamate + AMP + diphosphate + 2 H(+). It participates in purine metabolism; GMP biosynthesis; GMP from XMP (L-Gln route): step 1/1. In terms of biological role, catalyzes the synthesis of GMP from XMP. In Thermococcus kodakarensis (strain ATCC BAA-918 / JCM 12380 / KOD1) (Pyrococcus kodakaraensis (strain KOD1)), this protein is GMP synthase [glutamine-hydrolyzing] subunit A.